We begin with the raw amino-acid sequence, 341 residues long: Ferrochelatase (341 aa).

Positions 189 and 293 each coordinate Fe cation.

It belongs to the ferrochelatase family.

It is found in the cytoplasm. The enzyme catalyses heme b + 2 H(+) = protoporphyrin IX + Fe(2+). The protein operates within porphyrin-containing compound metabolism; protoheme biosynthesis; protoheme from protoporphyrin-IX: step 1/1. Its function is as follows. Catalyzes the ferrous insertion into protoporphyrin IX. The sequence is that of Ferrochelatase from Stutzerimonas stutzeri (strain A1501) (Pseudomonas stutzeri).